Here is a 375-residue protein sequence, read N- to C-terminus: N-acetylneuraminate epimerase (375 aa).

An N-terminal signal peptide occupies residues methionine 1 to alanine 22. Kelch repeat units follow at residues threonine 43 to aspartate 87, lysine 89 to glycine 140, lysine 142 to alanine 176, alanine 177 to glycine 222, leucine 225 to alanine 273, lysine 295 to asparagine 344, and valine 346 to glutamate 375. The active-site Proton acceptor is glutamate 231.

It belongs to the NanM family. In terms of assembly, homodimer.

Its subcellular location is the periplasm. The enzyme catalyses N-acetyl-alpha-neuraminate = N-acetyl-beta-neuraminate. Functionally, converts alpha-N-acetylneuranimic acid (Neu5Ac) to the beta-anomer, accelerating the equilibrium between the alpha- and beta-anomers. Probably facilitates sialidase-negative bacteria to compete successfully for limited amounts of extracellular Neu5Ac, which is likely taken up in the beta-anomer. In addition, the rapid removal of sialic acid from solution might be advantageous to the bacterium to damp down host responses. The polypeptide is N-acetylneuraminate epimerase (Haemophilus influenzae (strain 86-028NP)).